The primary structure comprises 125 residues: MAISQGKSTRLPSGARNVANRGKRKAELGRDPAETRVDEKRLKKIRTRGGNEKLRLATANKMNLTDPATGKSQVVDVLGVIENSANPNYVRRNIITKGAIVETPEGNAKVTSRPGQDGVLNGILI.

Residues Met1–Leu11 are compositionally biased toward polar residues. The segment at Met1–Asp38 is disordered. A compositionally biased stretch (basic and acidic residues) spans Lys25–Asp38.

This sequence belongs to the eukaryotic ribosomal protein eS8 family. In terms of assembly, part of the 30S ribosomal subunit.

The sequence is that of Small ribosomal subunit protein eS8 from Methanobrevibacter smithii (strain ATCC 35061 / DSM 861 / OCM 144 / PS).